We begin with the raw amino-acid sequence, 246 residues long: tRNA pseudouridine synthase C (246 aa).

Aspartate 58 is a catalytic residue.

Belongs to the pseudouridine synthase RluA family.

It carries out the reaction uridine(65) in tRNA = pseudouridine(65) in tRNA. In terms of biological role, responsible for synthesis of pseudouridine from uracil-65 in transfer RNAs. The polypeptide is tRNA pseudouridine synthase C (truC) (Vibrio parahaemolyticus serotype O3:K6 (strain RIMD 2210633)).